A 315-amino-acid chain; its full sequence is MKIFFVSSSFIALEVFKEILRHYEVVGVLTLPDKPKGRGQKLSQNVIKVEAIAKDIKVFDPLILDNNTLNSIRDLNPDLMLVFSYGKIFKKEFLDIFRMGCINVHPSLLPKYRGVSPIQSAILNGDCVSGITIQSMALEMDSGNILVQKKFKIRSYDTSYDISKLVSSLSPSLVLEALEKISKGFLGIPQKSSEATFCSFLKKELGFIDFNLSSFEIKNRINACNPWPLVRAKLDYSDIIFHRADFWEIDLYKERKVGEIVDFDPERGLFVNTGKGILFLLEVQRPGRRVLDFKSFYNGSRQLIGRVFSSVGGIY.

107–110 (SLLP) serves as a coordination point for (6S)-5,6,7,8-tetrahydrofolate.

Belongs to the Fmt family.

It catalyses the reaction L-methionyl-tRNA(fMet) + (6R)-10-formyltetrahydrofolate = N-formyl-L-methionyl-tRNA(fMet) + (6S)-5,6,7,8-tetrahydrofolate + H(+). Attaches a formyl group to the free amino group of methionyl-tRNA(fMet). The formyl group appears to play a dual role in the initiator identity of N-formylmethionyl-tRNA by promoting its recognition by IF2 and preventing the misappropriation of this tRNA by the elongation apparatus. In Borrelia garinii subsp. bavariensis (strain ATCC BAA-2496 / DSM 23469 / PBi) (Borreliella bavariensis), this protein is Methionyl-tRNA formyltransferase.